We begin with the raw amino-acid sequence, 371 residues long: Diterpene cyclase DtcycA (371 aa).

Mg(2+) is bound by residues asparagine 234, serine 238, and glutamate 242.

This sequence belongs to the terpene synthase family. As to quaternary structure, homodimer. Requires Mg(2+) as cofactor.

It carries out the reaction (2E,6E,10E)-geranylgeranyl diphosphate = cembrene C + diphosphate. It catalyses the reaction (2E,6E,10E)-geranylgeranyl diphosphate + H2O = (R)-nephthenol + diphosphate. Functionally, diterpene cyclases that can form multiple diterpene products. The protein is Diterpene cyclase DtcycA of Streptomyces sp.